Here is a 517-residue protein sequence, read N- to C-terminus: GMP synthase [glutamine-hydrolyzing] (517 aa).

The region spanning 11-202 (KIIVLDFGSQ…AFDVCEAKAN (192 aa)) is the Glutamine amidotransferase type-1 domain. The Nucleophile role is filled by C88. Active-site residues include H176 and E178. In terms of domain architecture, GMPS ATP-PPase spans 203-392 (WSMNDFIDMQ…LGMPEDLVWR (190 aa)). Residue 230–236 (SGGVDSS) coordinates ATP.

In terms of assembly, homodimer.

It catalyses the reaction XMP + L-glutamine + ATP + H2O = GMP + L-glutamate + AMP + diphosphate + 2 H(+). It functions in the pathway purine metabolism; GMP biosynthesis; GMP from XMP (L-Gln route): step 1/1. In terms of biological role, catalyzes the synthesis of GMP from XMP. This chain is GMP synthase [glutamine-hydrolyzing], found in Pediococcus pentosaceus (strain ATCC 25745 / CCUG 21536 / LMG 10740 / 183-1w).